The following is a 339-amino-acid chain: Undecaprenyl-phosphate 4-deoxy-4-formamido-L-arabinose transferase (339 aa).

2 consecutive transmembrane segments (helical) span residues 235 to 255 (LSLV…FLLV) and 269 to 289 (LFVL…GMGL).

This sequence belongs to the glycosyltransferase 2 family.

It is found in the cell inner membrane. The enzyme catalyses UDP-4-deoxy-4-formamido-beta-L-arabinose + di-trans,octa-cis-undecaprenyl phosphate = 4-deoxy-4-formamido-alpha-L-arabinopyranosyl di-trans,octa-cis-undecaprenyl phosphate + UDP. Its pathway is glycolipid biosynthesis; 4-amino-4-deoxy-alpha-L-arabinose undecaprenyl phosphate biosynthesis; 4-amino-4-deoxy-alpha-L-arabinose undecaprenyl phosphate from UDP-4-deoxy-4-formamido-beta-L-arabinose and undecaprenyl phosphate: step 1/2. It participates in bacterial outer membrane biogenesis; lipopolysaccharide biosynthesis. In terms of biological role, catalyzes the transfer of 4-deoxy-4-formamido-L-arabinose from UDP to undecaprenyl phosphate. The modified arabinose is attached to lipid A and is required for resistance to polymyxin and cationic antimicrobial peptides. This is Undecaprenyl-phosphate 4-deoxy-4-formamido-L-arabinose transferase from Pseudomonas paraeruginosa (strain DSM 24068 / PA7) (Pseudomonas aeruginosa (strain PA7)).